We begin with the raw amino-acid sequence, 285 residues long: Pantothenate synthetase (285 aa).

Residue 30–37 (MGNLHDGH) coordinates ATP. The Proton donor role is filled by His37. Gln61 is a (R)-pantoate binding site. Position 61 (Gln61) interacts with beta-alanine. 149-152 (GEKD) contributes to the ATP binding site. Gln155 provides a ligand contact to (R)-pantoate. Residues Ile178 and 186–189 (LSSR) contribute to the ATP site.

Belongs to the pantothenate synthetase family. As to quaternary structure, homodimer.

Its subcellular location is the cytoplasm. It carries out the reaction (R)-pantoate + beta-alanine + ATP = (R)-pantothenate + AMP + diphosphate + H(+). The protein operates within cofactor biosynthesis; (R)-pantothenate biosynthesis; (R)-pantothenate from (R)-pantoate and beta-alanine: step 1/1. Catalyzes the condensation of pantoate with beta-alanine in an ATP-dependent reaction via a pantoyl-adenylate intermediate. This chain is Pantothenate synthetase, found in Buchnera aphidicola subsp. Acyrthosiphon pisum (strain 5A).